We begin with the raw amino-acid sequence, 51 residues long: uncharacterized protein (51 aa).

This is an uncharacterized protein from Dictyostelium discoideum (Social amoeba).